Here is a 727-residue protein sequence, read N- to C-terminus: Non-structural protein 4 (727 aa).

2 disordered regions span residues methionine 1–glycine 38 and serine 673–lysine 727. Positions arginine 17–glycine 38 are enriched in polar residues. Positions serine 712–lysine 727 are enriched in basic residues.

In Rice dwarf virus (isolate Akita) (RDV), this protein is Non-structural protein 4.